An 89-amino-acid chain; its full sequence is MEIPKLLYIAVIAIGLSGSLTCATPLANPWADPEAEANPEAKAIAEATAEAIAEALAEPEPALPALPLLAFLFSLPAVQHWIEKNWING.

An N-terminal signal peptide occupies residues 1 to 23; it reads MEIPKLLYIAVIAIGLSGSLTCA. A propeptide spanning residues 24–61 is cleaved from the precursor; the sequence is TPLANPWADPEAEANPEAKAIAEATAEAIAEALAEPEP. The residue at position 88 (Asn88) is an Asparagine amide.

The protein belongs to the formicidae venom clade 1 family. Expressed by the venom gland.

The protein resides in the secreted. Functionally, vertebrate-selective toxin that causes pain by targeting voltage-gated sodium channels. This Pogonomyrmex rugosus (Desert harvester ant) protein is Myrmicitoxin(1)-Pr2a.